Consider the following 450-residue polypeptide: Hyaluronidase-1 (450 aa).

A signal peptide spans 1 to 35 (MRPFSLEVSLHLPWAMAAHLLPVCTLFLNLLSMTQ). Intrachain disulfides connect cysteine 58-cysteine 348 and cysteine 222-cysteine 236. An N-linked (GlcNAc...) asparagine glycan is attached at asparagine 85. Residue glutamate 146 is the Proton donor of the active site. Asparagine 231 and asparagine 365 each carry an N-linked (GlcNAc...) asparagine glycan. Intrachain disulfides connect cysteine 373–cysteine 384, cysteine 378–cysteine 433, and cysteine 435–cysteine 444. N-linked (GlcNAc...) asparagine glycosylation occurs at asparagine 398. The EGF-like domain occupies 433–444 (CRCYRGWRGTRC).

Belongs to the glycosyl hydrolase 56 family.

The protein localises to the secreted. Its subcellular location is the lysosome. The catalysed reaction is Random hydrolysis of (1-&gt;4)-linkages between N-acetyl-beta-D-glucosamine and D-glucuronate residues in hyaluronate.. In terms of biological role, may have a role in promoting tumor progression. May block the TGFB1-enhanced cell growth. The protein is Hyaluronidase-1 (HYAL1) of Bos taurus (Bovine).